We begin with the raw amino-acid sequence, 138 residues long: Large ribosomal subunit protein uL14m (138 aa).

This sequence belongs to the universal ribosomal protein uL14 family. As to quaternary structure, component of the mitochondrial large ribosomal subunit (mt-LSU). Mature yeast 74S mitochondrial ribosomes consist of a small (37S) and a large (54S) subunit. The 37S small subunit contains a 15S ribosomal RNA (15S mt-rRNA) and 34 different proteins. The 54S large subunit contains a 21S rRNA (21S mt-rRNA) and 46 different proteins.

Its subcellular location is the mitochondrion. In terms of biological role, component of the mitochondrial ribosome (mitoribosome), a dedicated translation machinery responsible for the synthesis of mitochondrial genome-encoded proteins, including at least some of the essential transmembrane subunits of the mitochondrial respiratory chain. The mitoribosomes are attached to the mitochondrial inner membrane and translation products are cotranslationally integrated into the membrane. The sequence is that of Large ribosomal subunit protein uL14m (MRPL38) from Saccharomyces cerevisiae (strain ATCC 204508 / S288c) (Baker's yeast).